The sequence spans 235 residues: (5-formylfuran-3-yl)methyl phosphate synthase (235 aa).

K27 functions as the Schiff-base intermediate with substrate in the catalytic mechanism. Residue K86 is the Proton acceptor of the active site.

Belongs to the MfnB family.

It carries out the reaction 2 D-glyceraldehyde 3-phosphate = 4-(hydroxymethyl)-2-furancarboxaldehyde phosphate + phosphate + 2 H2O. It functions in the pathway cofactor biosynthesis; methanofuran biosynthesis. Functionally, catalyzes the formation of 4-(hydroxymethyl)-2-furancarboxaldehyde phosphate (4-HFC-P) from two molecules of glyceraldehyde-3-P (GA-3-P). The polypeptide is (5-formylfuran-3-yl)methyl phosphate synthase (Archaeoglobus fulgidus (strain ATCC 49558 / DSM 4304 / JCM 9628 / NBRC 100126 / VC-16)).